The following is a 308-amino-acid chain: Mycothiol acetyltransferase (308 aa).

Glu44 is a 1D-myo-inositol 2-(L-cysteinylamino)-2-deoxy-alpha-D-glucopyranoside binding site. 83–85 (AVV) is an acetyl-CoA binding site. The region spanning 161–308 (VRLRTYAGSA…DVAYGRPEGD (148 aa)) is the N-acetyltransferase domain. 3 residues coordinate 1D-myo-inositol 2-(L-cysteinylamino)-2-deoxy-alpha-D-glucopyranoside: Glu188, Lys230, and Glu238. Acetyl-CoA is bound by residues 242-244 (VGV) and 249-255 (QGRGLGR). Tyr276 lines the 1D-myo-inositol 2-(L-cysteinylamino)-2-deoxy-alpha-D-glucopyranoside pocket. An acetyl-CoA-binding site is contributed by 281-286 (NTAALH).

The protein belongs to the acetyltransferase family. MshD subfamily. In terms of assembly, monomer.

It catalyses the reaction 1D-myo-inositol 2-(L-cysteinylamino)-2-deoxy-alpha-D-glucopyranoside + acetyl-CoA = mycothiol + CoA + H(+). Its function is as follows. Catalyzes the transfer of acetyl from acetyl-CoA to desacetylmycothiol (Cys-GlcN-Ins) to form mycothiol. The polypeptide is Mycothiol acetyltransferase (Gordonia bronchialis (strain ATCC 25592 / DSM 43247 / BCRC 13721 / JCM 3198 / KCTC 3076 / NBRC 16047 / NCTC 10667) (Rhodococcus bronchialis)).